A 191-amino-acid chain; its full sequence is NAD(P)H-dependent FMN reductase LOT6 (191 aa).

FMN-binding positions include arginine 11, 94–97, and tyrosine 124; that span reads QYNW.

As to quaternary structure, homodimer.

Its subcellular location is the cytoplasm. It is found in the nucleus. The catalysed reaction is FMNH2 + NADP(+) = FMN + NADPH + 2 H(+). The enzyme catalyses FMNH2 + NAD(+) = FMN + NADH + 2 H(+). In terms of biological role, has several reductase activities that are NAD(P)H-dependent and involve FMN as a cofactor, ferricyanide being the best substrate for reduction. May be involved in ferric iron assimilation. This is NAD(P)H-dependent FMN reductase LOT6 (LOT6) from Saccharomyces cerevisiae (strain ATCC 204508 / S288c) (Baker's yeast).